A 150-amino-acid chain; its full sequence is Actin-related protein 2/3 complex subunit 5-C (150 aa).

The disordered stretch occupies residues 21 to 45 (NKFVDEEEAGEGQQGPDEGEVDSAI).

This sequence belongs to the ARPC5 family. As to quaternary structure, component of the Arp2/3 complex composed of actr2/arp2, actr3/arp3, arpc1 (arpc1a or arpc1b), arpc2, arpc3, arpc4 and arpc5.

The protein localises to the cytoplasm. It is found in the cytoskeleton. Its subcellular location is the cell projection. It localises to the nucleus. Its function is as follows. Component of the Arp2/3 complex, a multiprotein complex that mediates actin polymerization upon stimulation by nucleation-promoting factor (NPF). The Arp2/3 complex mediates the formation of branched actin networks in the cytoplasm, providing the force for cell motility. In addition to its role in the cytoplasmic cytoskeleton, the Arp2/3 complex also promotes actin polymerization in the nucleus, thereby regulating gene transcription and repair of damaged DNA. The Arp2/3 complex promotes homologous recombination (HR) repair in response to DNA damage by promoting nuclear actin polymerization, leading to drive motility of double-strand breaks (DSBs). This chain is Actin-related protein 2/3 complex subunit 5-C (arpc5-c), found in Xenopus laevis (African clawed frog).